The chain runs to 76 residues: Small ribosomal subunit protein bS18 (76 aa).

It belongs to the bacterial ribosomal protein bS18 family. As to quaternary structure, part of the 30S ribosomal subunit. Forms a tight heterodimer with protein bS6.

Functionally, binds as a heterodimer with protein bS6 to the central domain of the 16S rRNA, where it helps stabilize the platform of the 30S subunit. The sequence is that of Small ribosomal subunit protein bS18 from Symbiobacterium thermophilum (strain DSM 24528 / JCM 14929 / IAM 14863 / T).